Here is a 253-residue protein sequence, read N- to C-terminus: Chitooligosaccharide deacetylase (253 aa).

The Mg(2+) site is built by H61 and H126.

The protein belongs to the YdjC deacetylase family. ChbG subfamily. In terms of assembly, homodimer. Requires Mg(2+) as cofactor.

It is found in the cytoplasm. It catalyses the reaction N,N'-diacetylchitobiose + H2O = N-acetyl-beta-D-glucosaminyl-(1-&gt;4)-D-glucosamine + acetate. It carries out the reaction diacetylchitobiose-6'-phosphate + H2O = N'-monoacetylchitobiose-6'-phosphate + acetate. The protein operates within glycan degradation; chitin degradation. Involved in the degradation of chitin. ChbG is essential for growth on the acetylated chitooligosaccharides chitobiose and chitotriose but is dispensable for growth on cellobiose and chitosan dimer, the deacetylated form of chitobiose. Deacetylation of chitobiose-6-P and chitotriose-6-P is necessary for both the activation of the chb promoter by the regulatory protein ChbR and the hydrolysis of phosphorylated beta-glucosides by the phospho-beta-glucosidase ChbF. Catalyzes the removal of only one acetyl group from chitobiose-6-P to yield monoacetylchitobiose-6-P, the inducer of ChbR and the substrate of ChbF. This chain is Chitooligosaccharide deacetylase, found in Yersinia pestis bv. Antiqua (strain Angola).